A 497-amino-acid polypeptide reads, in one-letter code: MGGYILAIDQGTTSTRAIVFDGNQKIAGVGQKEFKQHFPKSGWVEHDPEEIWQTVVSTVKEAIEKSGITANDIAAIGITNQRETVVVWDRETGKPIHNAIVWQDRRTAAFCDKLKKKGLEKTFVKKTGLLLDPYFSGTKLNWLLSNVKGAQVRAAKGELCFGTIDTFLIWRLTGGECFCTDATNASRTLLYNIAENAWDDELTEVLRVPKEMLPEVKDCAADFGVTDPSLFGAAIPILGVAGDQQAATIGQACFKPGMLKSTYGTGCFALLNTGKDMVRSKNRLLTTIAYRLDGETTYALEGSIFVAGAAVQWLRDGLKVIKAAPDTGSLAESADPSQEVYLVPAFTGLGAPHWDPDARGAIFGMTRNTGPAEFARAALEAVCYQTRDLLEAMHKDWRRNGNDTVLRVDGGMVASDWTMQRLSDLLDAPVDRPVILETTALGVAWLAGSRAGVWPNQEAFAKSWARDRRFEPHMDEATRKVKLKGWRSAVKRTLIAA.

Thr-12 is a binding site for ADP. ATP is bound by residues Thr-12, Thr-13, and Ser-14. Residue Thr-12 participates in sn-glycerol 3-phosphate binding. An ADP-binding site is contributed by Arg-16. Sn-glycerol 3-phosphate is bound by residues Arg-82, Glu-83, Tyr-134, and Asp-243. Positions 82, 83, 134, 243, and 244 each coordinate glycerol. The ADP site is built by Thr-265 and Gly-308. The ATP site is built by Thr-265, Gly-308, Gln-312, and Gly-411. ADP is bound at residue Gly-411.

The protein belongs to the FGGY kinase family.

It carries out the reaction glycerol + ATP = sn-glycerol 3-phosphate + ADP + H(+). Its pathway is polyol metabolism; glycerol degradation via glycerol kinase pathway; sn-glycerol 3-phosphate from glycerol: step 1/1. Inhibited by fructose 1,6-bisphosphate (FBP). Key enzyme in the regulation of glycerol uptake and metabolism. Catalyzes the phosphorylation of glycerol to yield sn-glycerol 3-phosphate. This chain is Glycerol kinase, found in Rhizobium meliloti (strain 1021) (Ensifer meliloti).